Consider the following 374-residue polypeptide: Arf-GAP with dual PH domain-containing protein 1 (374 aa).

The Arf-GAP domain maps to 7–126; that stretch reads RAVLELLQRP…EFIYPEKQEP (120 aa). The C4-type zinc finger occupies 21–44; it reads CADCGAPDPDWASYTLGVFICLSC. A Phosphoserine; by PKC modification is found at Ser87. PH domains lie at 129 to 230 and 252 to 356; these read AGYR…AARF and NYLK…KAVD. N6-acetyllysine is present on Lys272. The residue at position 276 (Thr276) is a Phosphothreonine; by PKC.

In terms of assembly, interacts with PRKCA, PRKCI and PRKCZ. Interacts with the N-terminal region of PRKD1. Phosphorylated by PRKCA, PRKCI, PRKCZ and PRKD1 in vitro. Expressed at highest levels in brain and at lower levels in peripheral blood leukocytes.

The protein resides in the nucleus. It localises to the cytoplasm. Functionally, GTPase-activating protein for the ADP ribosylation factor family. Binds phosphatidylinositol 3,4,5-trisphosphate (PtdInsP3) and inositol 1,3,4,5-tetrakisphosphate (InsP4). Regulates the incorporation of CD63 and CD9 into multivesicular bodies. The sequence is that of Arf-GAP with dual PH domain-containing protein 1 (ADAP1) from Homo sapiens (Human).